Consider the following 191-residue polypeptide: Calcium-binding protein L (191 aa).

The N-myristoyl glycine moiety is linked to residue Gly2. EF-hand domains are found at residues 25 to 59 (EQVS…RFKD), 60 to 95 (YDDA…ITKS), and 96 to 131 (PVSD…ALNT). Residues Asp73, Asp75, Asn77, Arg79, and Glu84 each contribute to the Ca(2+) site.

It belongs to the recoverin family.

This is Calcium-binding protein L (cbpL) from Dictyostelium discoideum (Social amoeba).